The following is a 418-amino-acid chain: MPMLNAQQFLNQFSLEAPLDESLYPIIRDICQEVKVHGDKALKMYNLTFDHTKTDHLEISHEQIKAAFDTLDEKTKQALQQSYERIKAYQESIKQTNQQLEESVECYEIYHPLESVGIYVPGGKASYPSTVLMTATLAQVAGVENIVVVTPPQPNGVSQEVLAACYITQVNQVFQVGGAQSIAALTYGTETIPKVDKIVGPGNQFVAYAKKYLFGQVGIDQIAGPTEIALIIDDTADLDAIVYDVFAQAEHDELARTYVIGEDAQVLKDLESRIAKALPNVDRYDIVSKSIANQHYLIHASNFDEACHVMNTIAPEHASIQTVNPQPYIEKVKYVGALFIGHYSPEVIGDYVAGPSHVLPTNRTARFTNGLSVNDFLTRNTVIHLSKDTFEQIADSAQHIAHVEALYNHQQSILIRQS.

3 residues coordinate NAD(+): tyrosine 119, glutamine 180, and asparagine 203. Substrate-binding residues include threonine 226, glutamine 248, and histidine 251. Glutamine 248 and histidine 251 together coordinate Zn(2+). Catalysis depends on proton acceptor residues glutamate 316 and histidine 317. Substrate-binding residues include histidine 317, aspartate 350, glutamate 404, and histidine 409. Aspartate 350 provides a ligand contact to Zn(2+). Residue histidine 409 coordinates Zn(2+).

The protein belongs to the histidinol dehydrogenase family. Zn(2+) serves as cofactor.

The catalysed reaction is L-histidinol + 2 NAD(+) + H2O = L-histidine + 2 NADH + 3 H(+). It participates in amino-acid biosynthesis; L-histidine biosynthesis; L-histidine from 5-phospho-alpha-D-ribose 1-diphosphate: step 9/9. In terms of biological role, catalyzes the sequential NAD-dependent oxidations of L-histidinol to L-histidinaldehyde and then to L-histidine. The sequence is that of Histidinol dehydrogenase from Staphylococcus aureus (strain MSSA476).